A 247-amino-acid polypeptide reads, in one-letter code: 3-deoxy-manno-octulosonate cytidylyltransferase (247 aa).

It belongs to the KdsB family.

The protein localises to the cytoplasm. The catalysed reaction is 3-deoxy-alpha-D-manno-oct-2-ulosonate + CTP = CMP-3-deoxy-beta-D-manno-octulosonate + diphosphate. The protein operates within nucleotide-sugar biosynthesis; CMP-3-deoxy-D-manno-octulosonate biosynthesis; CMP-3-deoxy-D-manno-octulosonate from 3-deoxy-D-manno-octulosonate and CTP: step 1/1. It participates in bacterial outer membrane biogenesis; lipopolysaccharide biosynthesis. Functionally, activates KDO (a required 8-carbon sugar) for incorporation into bacterial lipopolysaccharide in Gram-negative bacteria. This Chlorobium phaeovibrioides (strain DSM 265 / 1930) (Prosthecochloris vibrioformis (strain DSM 265)) protein is 3-deoxy-manno-octulosonate cytidylyltransferase.